Reading from the N-terminus, the 105-residue chain is SAGA-associated factor 11 (105 aa).

The SGF11-type zinc finger occupies 76-97; that stretch reads FRCPNCSRDLSANRFAAHLERC.

This sequence belongs to the SGF11 family. Component of the 1.8 MDa SAGA transcription coactivator-HAT complex. SAGA is built of 5 distinct domains with specialized functions. Within the SAGA complex, SUS1, SGF11, SGF73 and UBP8 form an additional subcomplex of SAGA called the DUB module (deubiquitination module). Interacts directly with SGF73, SUS1 and UBP8.

It localises to the nucleus. Functions as a component of the transcription regulatory histone acetylation (HAT) complex SAGA. At the promoters, SAGA is required for recruitment of the basal transcription machinery. It influences RNA polymerase II transcriptional activity through different activities such as TBP interaction and promoter selectivity, interaction with transcription activators, and chromatin modification through histone acetylation and deubiquitination. SAGA acetylates nucleosomal histone H3 to some extent (to form H3K9ac, H3K14ac, H3K18ac and H3K23ac). SAGA interacts with DNA via upstream activating sequences (UASs). Involved in transcriptional regulation of a subset of SAGA-regulated genes. Within the SAGA complex, participates in a subcomplex, that specifically deubiquitinates histones H2B. This Eremothecium gossypii (strain ATCC 10895 / CBS 109.51 / FGSC 9923 / NRRL Y-1056) (Yeast) protein is SAGA-associated factor 11.